Here is a 488-residue protein sequence, read N- to C-terminus: UDP-glycosyltransferase 85A3 (488 aa).

Residues S306, 363 to 365 (CPQ), 380 to 388 (HCGWNSTLE), and 402 to 405 (FAEQ) each bind UDP-alpha-D-glucose.

This sequence belongs to the UDP-glycosyltransferase family. In terms of tissue distribution, expressed in roots and flowers.

This is UDP-glycosyltransferase 85A3 (UGT85A3) from Arabidopsis thaliana (Mouse-ear cress).